Reading from the N-terminus, the 832-residue chain is Serine/threonine-protein kinase Doa (832 aa).

Disordered stretches follow at residues 1–86, 135–158, 179–215, and 258–419; these read MVAA…SKYI, LLQHQQQQHHQQQQQQHQEQQQYP, SDPFMQQQHMPAHQQQQHLPHKLQQSYSSSHVPKQAP, and SKIG…QLQQ. The span at 8–18 shows a compositional bias: polar residues; sequence VPTSSSSSAAT. Positions 20 to 32 are enriched in basic and acidic residues; it reads RQKDVDNKLEKCL. Low complexity-rich tracts occupy residues 40–53, 137–158, and 183–203; these read TSSNNNSTSNSNNN, QHQQQQHHQQQQQQHQEQQQYP, and MQQQHMPAHQQQQHLPHKLQQ. The segment covering 271–282 has biased composition (polar residues); sequence HSASFSSAQRPT. Low complexity-rich tracts occupy residues 285-310, 347-365, and 396-419; these read QFHQQHQQQQHLQQQQQHPQQQQHQH, QMQPVKYQQQQQHPHTQFQ, and SSSSNKQPQQPQQQQQQQQSQLQQ. Residues 479–799 enclose the Protein kinase domain; the sequence is YKIMATLGEG…LGEALHHPFF (321 aa). ATP-binding positions include 485-493 and Lys508; that span reads LGEGTFGRV. The active-site Proton acceptor is Asp605. The interval 809–832 is disordered; it reads GEVSNKQPLSSGSSSRERSHSLSR. The span at 823 to 832 shows a compositional bias: basic and acidic residues; it reads SRERSHSLSR.

It belongs to the protein kinase superfamily. CMGC Ser/Thr protein kinase family. Lammer subfamily. Interacts (via N-terminus) with x16 (via Arg/Ser-rich region). Interacts with eEF1gamma (via C-terminus); the interaction is probably direct, is transient and leads to phosphorylation of eEF1gamma by Doa. Mg(2+) is required as a cofactor. In terms of processing, autophosphorylated on serine, threonine and tyrosine residues. In terms of tissue distribution, ubiquitous expression in embryos. Stage 17 embryos show elevated expression in CNS and brain. Ubiquitous expression in larval imaginal disks. Increased expression posterior to the eye-antennal disk morphogenetic furrow.

The protein localises to the cytoplasm. It is found in the cytosol. Its subcellular location is the nucleus. It carries out the reaction L-seryl-[protein] + ATP = O-phospho-L-seryl-[protein] + ADP + H(+). The enzyme catalyses L-threonyl-[protein] + ATP = O-phospho-L-threonyl-[protein] + ADP + H(+). The catalysed reaction is L-tyrosyl-[protein] + ATP = O-phospho-L-tyrosyl-[protein] + ADP + H(+). In terms of biological role, dual specificity kinase involved in the negative regulation of microtubule-based transport through phsophorylation of the microtuble-binding protein eEF1gamma. May function in the control of alternative splicing by phosphorylating serine/arginine-rich splicing factors, the SR proteins, including x16. Negative regulator of the copia retrotransposon element of the white (w) gene. In the eye, it is required for normal pigmentation, photoreceptor cell development and for organization of interommatidial bristles. Also essential for embryonic segmentation and differentiation of the nervous system. Functionally, may be the specific isoform involved in regulation of microtubule-based transport through phosphorylation of the microtubule binding protein eEF1gamma. This is Serine/threonine-protein kinase Doa from Drosophila melanogaster (Fruit fly).